Reading from the N-terminus, the 254-residue chain is Acetylglutamate kinase (254 aa).

Residues 40–41, Arg-62, and Asn-154 contribute to the substrate site; that span reads GG. ATP contacts are provided by residues 177-182 and 205-207; these read DVSGIL and IIT.

It belongs to the acetylglutamate kinase family. ArgB subfamily. Homodimer.

The protein resides in the cytoplasm. It carries out the reaction N-acetyl-L-glutamate + ATP = N-acetyl-L-glutamyl 5-phosphate + ADP. Its pathway is amino-acid biosynthesis; L-arginine biosynthesis; N(2)-acetyl-L-ornithine from L-glutamate: step 2/4. Functionally, catalyzes the ATP-dependent phosphorylation of N-acetyl-L-glutamate. In Yersinia enterocolitica serotype O:8 / biotype 1B (strain NCTC 13174 / 8081), this protein is Acetylglutamate kinase.